The chain runs to 525 residues: Penton protein (525 aa).

The disordered stretch occupies residues 1 to 47 (MWGLQPPTSIPPPPPPTELTPSTYPAMVNGYPPPAASAQSCSSSGGQ). Residues 8 to 18 (TSIPPPPPPTE) show a composition bias toward pro residues. A compositionally biased stretch (low complexity) spans 36-47 (ASAQSCSSSGGQ).

Belongs to the adenoviridae penton family. In terms of assembly, interacts with the fiber protein (via N-terminal tail region). Interacts with the capsid vertex protein; this interaction binds the penton base to neighboring peripentonal hexons.

It is found in the virion. The protein resides in the host nucleus. Its function is as follows. Major capsid protein that self-associates to form penton base pentamers, each in the shape of a pentagon, situated at the 12 vertices of the pseudo T=25 capsid. Involved in virus secondary attachment to host cell after initial attachment by the fiber protein, and in endocytosis of virions. As the virus enters the host cell, penton proteins are shed concomitant with virion acidification in the endosome. The chain is Penton protein from Galliformes (FAdV-10).